We begin with the raw amino-acid sequence, 173 residues long: RNA silencing suppressor p19 (173 aa).

The span at 1-21 (MERAIQRSDAREQANSERWDG) shows a compositional bias: basic and acidic residues. The interval 1–34 (MERAIQRSDAREQANSERWDGRCGGTITPFKLPD) is disordered.

This sequence belongs to the tombusvirus protein p19 family. As to quaternary structure, homodimer.

Its function is as follows. Viral suppressor of RNA silencing which binds specifically to silencing RNAs (siRNAs). Acts as a molecular caliper to specifically select siRNAs based on the length of the duplex region of the RNA. The chain is RNA silencing suppressor p19 from Cucumis sativus (Cucumber).